We begin with the raw amino-acid sequence, 136 residues long: MLSPKRVKFRKQHRGRMKGISTRGNQICSGKFAPQALEPAWITSRQIEAGRRAISRYARRGGKIWIRIFPDKPVTMRPAETRMGSGKGSPEFWVSVVKPNRILYEIGGVPEDIAKAAIRIAAYKMPIRTQFIILHL.

The segment covering Met-1 to Met-17 has biased composition (basic residues). Residues Met-1–Asn-25 form a disordered region.

It belongs to the universal ribosomal protein uL16 family. As to quaternary structure, part of the 50S ribosomal subunit.

The protein resides in the plastid. The protein localises to the chloroplast. This Anthoceros angustus (Hornwort) protein is Large ribosomal subunit protein uL16c.